The chain runs to 344 residues: Uroporphyrinogen decarboxylase (344 aa).

Substrate is bound by residues 26 to 30, F45, D75, Y151, S206, and H320; that span reads RQAGR.

Belongs to the uroporphyrinogen decarboxylase family. As to quaternary structure, homodimer.

Its subcellular location is the cytoplasm. The enzyme catalyses uroporphyrinogen III + 4 H(+) = coproporphyrinogen III + 4 CO2. The protein operates within porphyrin-containing compound metabolism; protoporphyrin-IX biosynthesis; coproporphyrinogen-III from 5-aminolevulinate: step 4/4. Functionally, catalyzes the decarboxylation of four acetate groups of uroporphyrinogen-III to yield coproporphyrinogen-III. This Staphylococcus epidermidis (strain ATCC 35984 / DSM 28319 / BCRC 17069 / CCUG 31568 / BM 3577 / RP62A) protein is Uroporphyrinogen decarboxylase.